The sequence spans 166 residues: Large ribosomal subunit protein uL10 (166 aa).

The protein belongs to the universal ribosomal protein uL10 family. As to quaternary structure, part of the ribosomal stalk of the 50S ribosomal subunit. The N-terminus interacts with L11 and the large rRNA to form the base of the stalk. The C-terminus forms an elongated spine to which L12 dimers bind in a sequential fashion forming a multimeric L10(L12)X complex.

Functionally, forms part of the ribosomal stalk, playing a central role in the interaction of the ribosome with GTP-bound translation factors. This Streptococcus pyogenes serotype M28 (strain MGAS6180) protein is Large ribosomal subunit protein uL10.